Here is a 383-residue protein sequence, read N- to C-terminus: S-adenosylmethionine synthase (383 aa).

His-15 lines the ATP pocket. Position 17 (Asp-17) interacts with Mg(2+). Glu-43 is a K(+) binding site. Positions 56 and 99 each coordinate L-methionine. Positions 99-109 (QSPDINQGVDR) are flexible loop. ATP is bound by residues 164-166 (DAK), 230-231 (RF), Asp-239, 245-246 (RK), Ala-262, and Lys-266. Asp-239 serves as a coordination point for L-methionine. Lys-270 contacts L-methionine.

This sequence belongs to the AdoMet synthase family. As to quaternary structure, homotetramer; dimer of dimers. Mg(2+) is required as a cofactor. K(+) serves as cofactor.

The protein resides in the cytoplasm. It carries out the reaction L-methionine + ATP + H2O = S-adenosyl-L-methionine + phosphate + diphosphate. The protein operates within amino-acid biosynthesis; S-adenosyl-L-methionine biosynthesis; S-adenosyl-L-methionine from L-methionine: step 1/1. Its function is as follows. Catalyzes the formation of S-adenosylmethionine (AdoMet) from methionine and ATP. The overall synthetic reaction is composed of two sequential steps, AdoMet formation and the subsequent tripolyphosphate hydrolysis which occurs prior to release of AdoMet from the enzyme. This chain is S-adenosylmethionine synthase, found in Shewanella denitrificans (strain OS217 / ATCC BAA-1090 / DSM 15013).